A 58-amino-acid polypeptide reads, in one-letter code: Proteinase inhibitor PSKP-1 (58 aa).

A Kazal-like domain is found at 1 to 58 (VIEPKCYKYEGKKCPPDINPVCGTDKRTYYNECALCVFIRQSTKKADKAIKIKKWGKC). 3 disulfides stabilise this stretch: cysteine 6–cysteine 36, cysteine 14–cysteine 33, and cysteine 22–cysteine 58.

Monomer. As to expression, skin.

The protein localises to the secreted. Has antibacterial activity against Gram-negative bacterium E.coli ATCC 11229. Shows hemagglutinating activity. Inhibits prolyl endopeptidase, but not trypsin, chymotrypsin, V8 protease and proteinase K. May have a role in mucosal defense against microbes by interacting directly with their membranes. This Phyllomedusa sauvagei (Sauvage's leaf frog) protein is Proteinase inhibitor PSKP-1.